The following is a 251-amino-acid chain: MNILITNDDGISARGIKTLAEKMSKKHNIIVVAPREQKSASSHSISINIPIKIREEKIEGLDCKAYSLVGTPADCTQAGISLLAKGIDLVISGINRGFNSGTDILYSGTVSAAIEGALYDVPSIAISMDVKWDRDDEDYSKAANWVSKVVDLAEKKYLKKNVVLNINVPNINEEDIKGLKVCKIGKSTYKTEYVLLEEDNDKVYQTSGVRNQVEKDESDLYFLSQGYVTLTPLHFDFTNFKELNEVKKIFE.

The a divalent metal cation site is built by Asp8, Asp9, Ser39, and Asn95.

This sequence belongs to the SurE nucleotidase family. A divalent metal cation is required as a cofactor.

Its subcellular location is the cytoplasm. It catalyses the reaction a ribonucleoside 5'-phosphate + H2O = a ribonucleoside + phosphate. In terms of biological role, nucleotidase that shows phosphatase activity on nucleoside 5'-monophosphates. The protein is 5'-nucleotidase SurE of Clostridium botulinum (strain Eklund 17B / Type B).